A 463-amino-acid polypeptide reads, in one-letter code: Glutamyl-tRNA(Gln) amidotransferase subunit A, mitochondrial (463 aa).

Catalysis depends on charge relay system residues lysine 47 and serine 124. The active-site Acyl-ester intermediate is serine 148.

It belongs to the amidase family. GatA subfamily. Subunit of the heterotrimeric GatFAB amidotransferase (AdT) complex, composed of A, B and F subunits.

The protein resides in the mitochondrion. The enzyme catalyses L-glutamyl-tRNA(Gln) + L-glutamine + ATP + H2O = L-glutaminyl-tRNA(Gln) + L-glutamate + ADP + phosphate + H(+). Its function is as follows. Allows the formation of correctly charged Gln-tRNA(Gln) through the transamidation of misacylated Glu-tRNA(Gln) in the mitochondria. The reaction takes place in the presence of glutamine and ATP through an activated gamma-phospho-Glu-tRNA(Gln). The polypeptide is Glutamyl-tRNA(Gln) amidotransferase subunit A, mitochondrial (Eremothecium gossypii (strain ATCC 10895 / CBS 109.51 / FGSC 9923 / NRRL Y-1056) (Yeast)).